We begin with the raw amino-acid sequence, 62 residues long: Sperm protamine P1 (62 aa).

The segment at 1–62 is disordered; that stretch reads MARYRHSRSR…RYSRRRRRRY (62 aa).

Belongs to the protamine P1 family. Testis.

The protein localises to the nucleus. It is found in the chromosome. Protamines substitute for histones in the chromatin of sperm during the haploid phase of spermatogenesis. They compact sperm DNA into a highly condensed, stable and inactive complex. The polypeptide is Sperm protamine P1 (PRM1) (Dorcopsulus vanheurni (Lesser forest wallaby)).